The following is a 212-amino-acid chain: ATP phosphoribosyltransferase (212 aa).

It belongs to the ATP phosphoribosyltransferase family. Short subfamily. As to quaternary structure, heteromultimer composed of HisG and HisZ subunits.

It localises to the cytoplasm. It carries out the reaction 1-(5-phospho-beta-D-ribosyl)-ATP + diphosphate = 5-phospho-alpha-D-ribose 1-diphosphate + ATP. The protein operates within amino-acid biosynthesis; L-histidine biosynthesis; L-histidine from 5-phospho-alpha-D-ribose 1-diphosphate: step 1/9. Catalyzes the condensation of ATP and 5-phosphoribose 1-diphosphate to form N'-(5'-phosphoribosyl)-ATP (PR-ATP). Has a crucial role in the pathway because the rate of histidine biosynthesis seems to be controlled primarily by regulation of HisG enzymatic activity. In Clostridium botulinum (strain ATCC 19397 / Type A), this protein is ATP phosphoribosyltransferase.